We begin with the raw amino-acid sequence, 117 residues long: Large ribosomal subunit protein bL20c (117 aa).

Belongs to the bacterial ribosomal protein bL20 family.

The protein localises to the plastid. It is found in the chloroplast. Binds directly to 23S ribosomal RNA and is necessary for the in vitro assembly process of the 50S ribosomal subunit. It is not involved in the protein synthesizing functions of that subunit. In Ceratophyllum demersum (Rigid hornwort), this protein is Large ribosomal subunit protein bL20c.